The primary structure comprises 494 residues: UPF0371 protein STER_1332 (494 aa).

Belongs to the UPF0371 family.

The protein is UPF0371 protein STER_1332 of Streptococcus thermophilus (strain ATCC BAA-491 / LMD-9).